Here is a 270-residue protein sequence, read N- to C-terminus: 4-hydroxy-tetrahydrodipicolinate reductase (270 aa).

NAD(+)-binding positions include 9 to 14 (GAGGRM) and Glu-35. Arg-36 is a binding site for NADP(+). Residues 99 to 101 (GTT) and 123 to 126 (ASNF) contribute to the NAD(+) site. His-156 (proton donor/acceptor) is an active-site residue. Residue His-157 participates in (S)-2,3,4,5-tetrahydrodipicolinate binding. Residue Lys-160 is the Proton donor of the active site. (S)-2,3,4,5-tetrahydrodipicolinate is bound at residue 166–167 (GT).

Belongs to the DapB family.

The protein localises to the cytoplasm. It catalyses the reaction (S)-2,3,4,5-tetrahydrodipicolinate + NAD(+) + H2O = (2S,4S)-4-hydroxy-2,3,4,5-tetrahydrodipicolinate + NADH + H(+). The catalysed reaction is (S)-2,3,4,5-tetrahydrodipicolinate + NADP(+) + H2O = (2S,4S)-4-hydroxy-2,3,4,5-tetrahydrodipicolinate + NADPH + H(+). It participates in amino-acid biosynthesis; L-lysine biosynthesis via DAP pathway; (S)-tetrahydrodipicolinate from L-aspartate: step 4/4. Catalyzes the conversion of 4-hydroxy-tetrahydrodipicolinate (HTPA) to tetrahydrodipicolinate. The sequence is that of 4-hydroxy-tetrahydrodipicolinate reductase from Pasteurella multocida (strain Pm70).